The primary structure comprises 702 residues: DnaJ homolog subfamily C member 14 (702 aa).

Disordered regions lie at residues M1–G148 and D165–Q229. Residues H75–P84 are compositionally biased toward pro residues. Positions E88–V103 are enriched in acidic residues. Over residues T113–G133 the composition is skewed to polar residues. Over residues D165–E175 the composition is skewed to acidic residues. Positions P192–F201 are enriched in basic residues. The span at P202–S217 shows a compositional bias: basic and acidic residues. Positions P218–R227 are enriched in basic residues. Helical transmembrane passes span A250–G270, G300–F320, and L326–W346. Residues N443 to R507 form the J domain. The disordered stretch occupies residues M658–R702. The segment covering P659 to A676 has biased composition (low complexity). A compositionally biased stretch (basic residues) spans P690–R702.

In terms of assembly, interacts with the FxxxFxxxF motif of DRD1 via its C-terminal domain. Highly expressed in pancreas and selectively expressed in brain, lung, liver, skeletal muscle and kidney.

It is found in the endoplasmic reticulum membrane. Its function is as follows. Regulates the export of target proteins, such as DRD1, from the endoplasmic reticulum to the cell surface. This is DnaJ homolog subfamily C member 14 (DNAJC14) from Homo sapiens (Human).